A 227-amino-acid chain; its full sequence is Orotidine 5'-phosphate decarboxylase (227 aa).

Substrate-binding positions include Asp8, Lys30, 58 to 67, Thr117, Arg177, Gln186, Gly206, and Arg207; that span reads DLKLYDIPNT. Lys60 (proton donor) is an active-site residue.

The protein belongs to the OMP decarboxylase family. Type 1 subfamily. In terms of assembly, homodimer.

It catalyses the reaction orotidine 5'-phosphate + H(+) = UMP + CO2. Its pathway is pyrimidine metabolism; UMP biosynthesis via de novo pathway; UMP from orotate: step 2/2. Functionally, catalyzes the decarboxylation of orotidine 5'-monophosphate (OMP) to uridine 5'-monophosphate (UMP). This Campylobacter lari (strain RM2100 / D67 / ATCC BAA-1060) protein is Orotidine 5'-phosphate decarboxylase.